A 34-amino-acid chain; its full sequence is TCRYLFGGCKTTADCCKHLACRSDGKYCAWDGTF.

Disulfide bonds link Cys-2-Cys-16, Cys-9-Cys-21, and Cys-15-Cys-28. The tract at residues 4-6 (YLF) is involved in active face.

Belongs to the neurotoxin 10 (Hwtx-1) family. 09 (HaTx) subfamily. Expressed by the venom gland.

The protein localises to the secreted. In terms of biological role, reversibly inhibits potassium currents in oocytes expressing Kv2.1/KCNB1 channels (Kd=2.7 uM). Acts by shifting activation of the channel to more depolarized voltages. The toxin may bind to the S3b-S4 helices of the voltage sensor paddle. One, two, three or four toxin molecules may bind the Kv2.1/KCNB1 channel. It shows low to moderate affinity for lipid bilayers. It partitions into the bilayer membrane, where it stabilizes at the water/membrane interface. This is Kappa-theraphotoxin-Scg1a from Stromatopelma calceatum griseipes (Feather leg baboon tarantula).